Reading from the N-terminus, the 385-residue chain is MAIVVVGAGTAGVNAAFWLRQYGYKGEIRIFSRESVAPYQRPPLSKAFLTSEIAESAVPLKPEGFYTNNNITISLNTPIVSIDVGRKIVSSKDGKEYAYEKLILATPASARRLTCEGSELSGVCYLRSMEDAKNLRRKLVESASVVVLGGGVIGLEVASAAVGLGKRVTVIEATPRVMARVVTPAAANLVRARLEAEGIEFKLNAKLTSIKGRNGHVEQCVLESGEEIQADLIVVGIGAIPELELATEAALEVSNGVVVDDQMCTSDTSIYAIGDCAMARNPFWGTMVRLETIHNAVTHAQIVASSICGTSTPAPTPPRFWSDLKGMALQGLGALKDYDKLVVAINNETLELEVLAYKQERLIATETINLPKRQGALAGSIKLPD.

FAD is bound by residues 8-11, 32-33, isoleucine 79, glutamate 156, aspartate 275, and isoleucine 293; these read AGTA and SR.

This sequence belongs to the FAD-dependent oxidoreductase family. As to quaternary structure, homodimer. FAD is required as a cofactor.

It localises to the cytoplasm. The catalysed reaction is 2 reduced [rubredoxin] + NAD(+) + H(+) = 2 oxidized [rubredoxin] + NADH. Its pathway is hydrocarbon metabolism; alkane degradation. Its function is as follows. Involved in the hydrocarbon hydroxylating system, which transfers electrons from NADH to rubredoxin reductase and then through rubredoxin to alkane 1 monooxygenase. In Ectopseudomonas oleovorans (Pseudomonas oleovorans), this protein is Rubredoxin-NAD(+) reductase (alkT).